A 297-amino-acid polypeptide reads, in one-letter code: MRTKSPSSLNLKVIFIGSSILILIIIYLARSNISSSSSKPISKTNLSQEEEETQHKQEGCPTTQQCTKMPLSLSDALVHYVTSNVTPQQTFDEVSVSKRVLDKKSPCNFLVFGLGHDSLMWASLNHGGRTLFIEEDQAWIAIVTKKFPNLESYHVVYDTKVKDSDKLMELGRSEECRSVSDPRNSKCDLALKDFPADFYETKWDLIMVDAPTGYHEEAPGRMSAIYTAGLLARNREDGETDVFVHDVNRPVEDEFSATFLCKGYMREQNGRLRHFTIPSHRARAGRPFCPVEVDRRR.

A helical transmembrane segment spans residues 9–29; that stretch reads LNLKVIFIGSSILILIIIYLA. Over residues 35 to 47 the composition is skewed to low complexity; sequence SSSSKPISKTNLS. The segment at 35–63 is disordered; that stretch reads SSSSKPISKTNLSQEEEETQHKQEGCPTT.

Belongs to the methyltransferase superfamily. Expressed in hypocotyls, roots, rosette leaves, stems and siliques.

It is found in the golgi apparatus membrane. It carries out the reaction glucuronoxylan D-glucuronate + n S-adenosyl-L-methionine = glucuronoxylan 4-O-methyl-D-glucuronate + n S-adenosyl-L-homocysteine + n H(+). Functionally, methyltransferase catalyzing 4-O-methylation of glucuronic acid side chains on xylan. This Arabidopsis thaliana (Mouse-ear cress) protein is Glucuronoxylan 4-O-methyltransferase 3 (GXM3).